The following is a 76-amino-acid chain: Large ribosomal subunit protein uL29 (76 aa).

Belongs to the universal ribosomal protein uL29 family.

The polypeptide is Large ribosomal subunit protein uL29 (Corynebacterium glutamicum (strain R)).